The following is a 677-amino-acid chain: Transcription factor IIIB 90 kDa subunit (677 aa).

The TFIIB-type zinc-finger motif lies at 2–33 (TGRVCRGCGGTDIELDAARGDAVCTACGSVLE). Positions 6, 9, 25, and 28 each coordinate Zn(2+). Tandem repeats lie at residues 91–172 (RHIH…LLAR) and 185–269 (LYIP…EFED). Disordered regions lie at residues 340–368 (KGGLASLAKDGSTEDTASSLCGEEDTEDE) and 385–413 (LLGGAPGSSEAAGSPEWGGRPPALGSLLD). Phosphothreonine is present on Thr-365. At Ser-450 the chain carries Phosphoserine. Disordered stretches follow at residues 501–521 (YKEHKPKKSCKRREPIQASTA) and 544–653 (RGLS…EDGE). Ser-553 carries the post-translational modification Phosphoserine. Residues 640-653 (EEADEEEPDEEDGE) are compositionally biased toward acidic residues.

The protein belongs to the TFIIB family. As to quaternary structure, TFIIIB comprises at least the TATA-binding protein (TBP) and the B-related factor 1 (BRF1/TFIIIB90). Interacts with BDP1. Interacts with MAF1.

The protein resides in the nucleus. In terms of biological role, general activator of RNA polymerase which utilizes different TFIIIB complexes at structurally distinct promoters. The isoform 1 is involved in the transcription of tRNA, adenovirus VA1, 7SL and 5S RNA. Isoform 2 is required for transcription of the U6 promoter. The chain is Transcription factor IIIB 90 kDa subunit (BRF1) from Homo sapiens (Human).